Consider the following 444-residue polypeptide: Xylose isomerase (444 aa).

Residues H101 and D104 contribute to the active site. Residues E232, E268, H271, D296, D307, D309, and D339 each contribute to the Mg(2+) site.

Belongs to the xylose isomerase family. As to quaternary structure, homotetramer. Mg(2+) serves as cofactor.

The protein resides in the cytoplasm. It catalyses the reaction alpha-D-xylose = alpha-D-xylulofuranose. In Thermotoga petrophila (strain ATCC BAA-488 / DSM 13995 / JCM 10881 / RKU-1), this protein is Xylose isomerase.